We begin with the raw amino-acid sequence, 464 residues long: UDP-N-acetylmuramoyl-tripeptide--D-alanyl-D-alanine ligase (464 aa).

125–131 is a binding site for ATP; the sequence is GSNGKTT.

It belongs to the MurCDEF family. MurF subfamily.

The protein resides in the cytoplasm. The enzyme catalyses D-alanyl-D-alanine + UDP-N-acetyl-alpha-D-muramoyl-L-alanyl-gamma-D-glutamyl-meso-2,6-diaminopimelate + ATP = UDP-N-acetyl-alpha-D-muramoyl-L-alanyl-gamma-D-glutamyl-meso-2,6-diaminopimeloyl-D-alanyl-D-alanine + ADP + phosphate + H(+). The protein operates within cell wall biogenesis; peptidoglycan biosynthesis. Functionally, involved in cell wall formation. Catalyzes the final step in the synthesis of UDP-N-acetylmuramoyl-pentapeptide, the precursor of murein. In Borreliella burgdorferi (strain ATCC 35210 / DSM 4680 / CIP 102532 / B31) (Borrelia burgdorferi), this protein is UDP-N-acetylmuramoyl-tripeptide--D-alanyl-D-alanine ligase.